The primary structure comprises 926 residues: Alpha-aminoadipic semialdehyde synthase, mitochondrial (926 aa).

Residues 1-27 (MLQVHRTGLGRLGVSLSKGLHHKAVLA) constitute a mitochondrion transit peptide. The segment at 28 to 476 (VRREDVNAWE…ESRERAQSLS (449 aa)) is lysine-ketoglutarate reductase. 2 positions are modified to N6-acetyllysine: Lys-48 and Lys-56. Residue Lys-93 is modified to N6-acetyllysine; alternate. At Lys-93 the chain carries N6-succinyllysine; alternate. Lys-128 bears the N6-acetyllysine mark. Lys-138 is subject to N6-acetyllysine; alternate. Lys-138 bears the N6-succinyllysine; alternate mark. Lys-274 carries the post-translational modification N6-succinyllysine. At Lys-286 the chain carries N6-acetyllysine; alternate. Lys-286 bears the N6-succinyllysine; alternate mark. N6-succinyllysine is present on Lys-333. Lys-458 bears the N6-acetyllysine; alternate mark. Lys-458 carries the post-translational modification N6-succinyllysine; alternate. Positions 477 to 926 (MGTRRKVLVL…IYTTQSTIKP (450 aa)) are saccharopine dehydrogenase. 3 residues coordinate NAD(+): Ser-488, Asp-512, and Gln-516. Lys-523 is subject to N6-acetyllysine; alternate. N6-succinyllysine; alternate is present on Lys-523. NAD(+) is bound at residue Ile-533. Lys-535 carries the post-translational modification N6-acetyllysine; alternate. The residue at position 535 (Lys-535) is an N6-succinyllysine; alternate. NAD(+) is bound by residues Leu-554, Ala-576, and Ser-577. 577–578 (SY) is an L-saccharopine binding site. Lys-584 carries the post-translational modification N6-acetyllysine; alternate. At Lys-584 the chain carries N6-succinyllysine; alternate. Residues Leu-603, Asp-604, and Pro-605 each coordinate NAD(+). Position 604 (Asp-604) interacts with L-saccharopine. Residue Arg-703 coordinates L-saccharopine. Lys-707 is modified (N6-acetyllysine). 724 to 726 (TLR) serves as a coordination point for L-saccharopine. Lys-732 is modified (N6-succinyllysine). Position 739 is an N6-acetyllysine (Lys-739). Position 761 is an N6-acetyllysine; alternate (Lys-761). N6-succinyllysine; alternate is present on Lys-761. Residue Lys-780 is modified to N6-acetyllysine.

In the N-terminal section; belongs to the AlaDH/PNT family. The protein in the C-terminal section; belongs to the saccharopine dehydrogenase family. Homotetramer. In terms of tissue distribution, expressed in all 16 tissues examined with highest expression in the liver.

It is found in the mitochondrion. The catalysed reaction is L-saccharopine + NADP(+) + H2O = L-lysine + 2-oxoglutarate + NADPH + H(+). The enzyme catalyses L-saccharopine + NAD(+) + H2O = (S)-2-amino-6-oxohexanoate + L-glutamate + NADH + H(+). Its pathway is amino-acid degradation; L-lysine degradation via saccharopine pathway; glutaryl-CoA from L-lysine: step 1/6. It participates in amino-acid degradation; L-lysine degradation via saccharopine pathway; glutaryl-CoA from L-lysine: step 2/6. Its function is as follows. Bifunctional enzyme that catalyzes the first two steps in lysine degradation. The protein is Alpha-aminoadipic semialdehyde synthase, mitochondrial of Homo sapiens (Human).